A 38-amino-acid polypeptide reads, in one-letter code: MKIYSSIKKRCEHCRIIKRKGKRFVICKVNPSHKQRQG.

This sequence belongs to the bacterial ribosomal protein bL36 family.

The chain is Large ribosomal subunit protein bL36 from Chlorobium limicola (strain DSM 245 / NBRC 103803 / 6330).